The primary structure comprises 269 residues: Aminodeoxychorismate lyase (269 aa).

Position 140 is an N6-(pyridoxal phosphate)lysine (K140).

This sequence belongs to the class-IV pyridoxal-phosphate-dependent aminotransferase family. As to quaternary structure, homodimer. Pyridoxal 5'-phosphate is required as a cofactor.

It catalyses the reaction 4-amino-4-deoxychorismate = 4-aminobenzoate + pyruvate + H(+). It participates in cofactor biosynthesis; tetrahydrofolate biosynthesis; 4-aminobenzoate from chorismate: step 2/2. Its function is as follows. Involved in the biosynthesis of p-aminobenzoate (PABA), a precursor of tetrahydrofolate. Converts 4-amino-4-deoxychorismate into 4-aminobenzoate (PABA) and pyruvate. The polypeptide is Aminodeoxychorismate lyase (pabC) (Escherichia coli (strain K12)).